We begin with the raw amino-acid sequence, 307 residues long: MSDSRGVLSISTSTTFQGLIQTLNRYWAEQGCVLVQPLDLEVGAGTFHPATFLRALGPEPWNAAYVQPSRRPTDGRYGENPNRLQRYYQYQVAMKPNPDNLQELYLASLQALGIDPLVHDVRFVEDNWESPTLGAWGLGWEVWLNGMEVTQFTYFQQAGGLECKPVLGEVTYGLERLCMYLQSCDNVYDLVWTYGPDGTPVTYGDVYHQNEVEQSAYNFEHANVTELLHTFDACEREAKSLVEAVLPLPAYEKVIKASHCFNLLDARRTISVTERQRYILRIRTLSQEVAKAYYAQREKLGFPNLRR.

Belongs to the class-II aminoacyl-tRNA synthetase family. As to quaternary structure, tetramer of two alpha and two beta subunits.

It is found in the cytoplasm. It catalyses the reaction tRNA(Gly) + glycine + ATP = glycyl-tRNA(Gly) + AMP + diphosphate. The protein is Glycine--tRNA ligase alpha subunit of Xylella fastidiosa (strain M23).